The chain runs to 963 residues: Bifunctional glutamine synthetase adenylyltransferase/adenylyl-removing enzyme (963 aa).

The interval 1–451 is adenylyl removase; that stretch reads MAAPSELQLY…EHFADIIAER (451 aa). Positions 461–963 are adenylyl transferase; it reads TIEWKALWAG…VAFWEKVFAE (503 aa).

This sequence belongs to the GlnE family. Mg(2+) is required as a cofactor.

The catalysed reaction is [glutamine synthetase]-O(4)-(5'-adenylyl)-L-tyrosine + phosphate = [glutamine synthetase]-L-tyrosine + ADP. It catalyses the reaction [glutamine synthetase]-L-tyrosine + ATP = [glutamine synthetase]-O(4)-(5'-adenylyl)-L-tyrosine + diphosphate. Involved in the regulation of glutamine synthetase GlnA, a key enzyme in the process to assimilate ammonia. When cellular nitrogen levels are high, the C-terminal adenylyl transferase (AT) inactivates GlnA by covalent transfer of an adenylyl group from ATP to specific tyrosine residue of GlnA, thus reducing its activity. Conversely, when nitrogen levels are low, the N-terminal adenylyl removase (AR) activates GlnA by removing the adenylyl group by phosphorolysis, increasing its activity. The regulatory region of GlnE binds the signal transduction protein PII (GlnB) which indicates the nitrogen status of the cell. The sequence is that of Bifunctional glutamine synthetase adenylyltransferase/adenylyl-removing enzyme from Hahella chejuensis (strain KCTC 2396).